The chain runs to 280 residues: Dual adapter for phosphotyrosine and 3-phosphotyrosine and 3-phosphoinositide (280 aa).

Residues 1–20 form a disordered region; that stretch reads MGRAELLEGKMSTQDPSDLW. Positions 35–129 constitute an SH2 domain; the sequence is WYHGNLTRHA…GTLMVLKHPY (95 aa). Tyr-139 is subject to Phosphotyrosine. Ser-141 is subject to Phosphoserine. Residues 164–259 enclose the PH domain; that stretch reads LGTKEGYLTK…WIKILRWKLS (96 aa).

As to quaternary structure, interacts with PtdIns(3,4,5)P3 and PLCG2. In vitro, interacts with PtdIns(3,4)P2. Phosphorylated on tyrosine residues. In terms of tissue distribution, highly expressed in placenta and lung, followed by brain, heart, kidney, liver, pancreas and skeletal muscle. Expressed by B-lymphocytes, but not T-lymphocytes or nonhematopoietic cells.

Its subcellular location is the cytoplasm. The protein localises to the membrane. In terms of biological role, may act as a B-cell-associated adapter that regulates B-cell antigen receptor (BCR)-signaling downstream of PI3K. This chain is Dual adapter for phosphotyrosine and 3-phosphotyrosine and 3-phosphoinositide (DAPP1), found in Homo sapiens (Human).